An 899-amino-acid chain; its full sequence is Protein translocase subunit SecA (899 aa).

ATP contacts are provided by residues Gln87, 105–109 (GEGKT), and Asp516. Residues Cys884, Cys886, Cys895, and His896 each contribute to the Zn(2+) site.

Belongs to the SecA family. In terms of assembly, monomer and homodimer. Part of the essential Sec protein translocation apparatus which comprises SecA, SecYEG and auxiliary proteins SecDF. Other proteins may also be involved. It depends on Zn(2+) as a cofactor.

The protein resides in the cell inner membrane. It localises to the cytoplasm. It carries out the reaction ATP + H2O + cellular proteinSide 1 = ADP + phosphate + cellular proteinSide 2.. Part of the Sec protein translocase complex. Interacts with the SecYEG preprotein conducting channel. Has a central role in coupling the hydrolysis of ATP to the transfer of proteins into and across the cell membrane, serving as an ATP-driven molecular motor driving the stepwise translocation of polypeptide chains across the membrane. This is Protein translocase subunit SecA from Borreliella burgdorferi (strain ATCC 35210 / DSM 4680 / CIP 102532 / B31) (Borrelia burgdorferi).